A 95-amino-acid chain; its full sequence is Aspartyl/glutamyl-tRNA(Asn/Gln) amidotransferase subunit C (95 aa).

This sequence belongs to the GatC family. In terms of assembly, heterotrimer of A, B and C subunits.

It catalyses the reaction L-glutamyl-tRNA(Gln) + L-glutamine + ATP + H2O = L-glutaminyl-tRNA(Gln) + L-glutamate + ADP + phosphate + H(+). It carries out the reaction L-aspartyl-tRNA(Asn) + L-glutamine + ATP + H2O = L-asparaginyl-tRNA(Asn) + L-glutamate + ADP + phosphate + 2 H(+). Allows the formation of correctly charged Asn-tRNA(Asn) or Gln-tRNA(Gln) through the transamidation of misacylated Asp-tRNA(Asn) or Glu-tRNA(Gln) in organisms which lack either or both of asparaginyl-tRNA or glutaminyl-tRNA synthetases. The reaction takes place in the presence of glutamine and ATP through an activated phospho-Asp-tRNA(Asn) or phospho-Glu-tRNA(Gln). The protein is Aspartyl/glutamyl-tRNA(Asn/Gln) amidotransferase subunit C of Citrifermentans bemidjiense (strain ATCC BAA-1014 / DSM 16622 / JCM 12645 / Bem) (Geobacter bemidjiensis).